A 345-amino-acid chain; its full sequence is Ninja-family protein AFP1 (345 aa).

Disordered regions lie at residues 114–185 (TSLP…ATAN) and 201–256 (QVSG…RRLS). 2 stretches are compositionally biased toward basic and acidic residues: residues 123-132 (EWRKRKEMQT) and 222-232 (LETKASSDEAR). Residues 235–249 (PSTTQPQQETTTKPT) show a composition bias toward low complexity.

This sequence belongs to the Ninja family. In terms of assembly, forms a heterodimer with AFP2. Interacts with ABI5/DPBF1, DPBF2, AREB3/DPBF3, ABF1, ABF3/DPBF5 and ABF4/AREB2.

The protein localises to the nucleus. Functionally, acts as a negative regulator of abscisic acid (ABA) response during germination through the ubiquitin-mediated proteolysis of ABI5/DPBF1. The protein is Ninja-family protein AFP1 (AFP1) of Arabidopsis thaliana (Mouse-ear cress).